The following is a 218-amino-acid chain: Ras-related protein RABA1i (218 aa).

20 to 27 (GDSGVGKS) contributes to the GTP binding site. Residues 42–50 (SRATIGVEF) carry the Effector region motif. Residues 68 to 72 (DTAGQ), 126 to 129 (NKAD), and 156 to 157 (SA) each bind GTP. 2 S-geranylgeranyl cysteine lipidation sites follow: Cys215 and Cys216.

It belongs to the small GTPase superfamily. Rab family.

Its subcellular location is the cell membrane. Functionally, intracellular vesicle trafficking and protein transport. The polypeptide is Ras-related protein RABA1i (RABA1I) (Arabidopsis thaliana (Mouse-ear cress)).